Reading from the N-terminus, the 243-residue chain is Glycerophosphodiester phosphodiesterase (243 aa).

Residues 3–239 (TLVIAHRGDS…DDPETLINLV (237 aa)) form the GP-PDE domain. The Proton acceptor role is filled by His-8. Positions 35 and 37 each coordinate Ca(2+). His-50 acts as the Proton donor in catalysis. Glu-110 is a Ca(2+) binding site.

It belongs to the glycerophosphoryl diester phosphodiesterase family. As to quaternary structure, homodimer. It depends on Mg(2+) as a cofactor. Requires Ca(2+) as cofactor.

It catalyses the reaction a sn-glycero-3-phosphodiester + H2O = an alcohol + sn-glycerol 3-phosphate + H(+). The enzyme catalyses sn-glycerol 3-phosphocholine + H2O = sn-glycerol 3-phosphate + choline + H(+). Inhibited by EDTA. In terms of biological role, glycerophosphodiester phosphodiesterase hydrolyzes glycerophosphodiesters into glycerol-3-phosphate (G3P) and the corresponding alcohol. Can use glycerophosphocholine. This chain is Glycerophosphodiester phosphodiesterase, found in Caldanaerobacter subterraneus subsp. tengcongensis (strain DSM 15242 / JCM 11007 / NBRC 100824 / MB4) (Thermoanaerobacter tengcongensis).